A 316-amino-acid chain; its full sequence is Methionyl-tRNA formyltransferase (316 aa).

112 to 115 (SLLP) contributes to the (6S)-5,6,7,8-tetrahydrofolate binding site.

The protein belongs to the Fmt family.

The catalysed reaction is L-methionyl-tRNA(fMet) + (6R)-10-formyltetrahydrofolate = N-formyl-L-methionyl-tRNA(fMet) + (6S)-5,6,7,8-tetrahydrofolate + H(+). Attaches a formyl group to the free amino group of methionyl-tRNA(fMet). The formyl group appears to play a dual role in the initiator identity of N-formylmethionyl-tRNA by promoting its recognition by IF2 and preventing the misappropriation of this tRNA by the elongation apparatus. The sequence is that of Methionyl-tRNA formyltransferase from Actinobacillus pleuropneumoniae serotype 7 (strain AP76).